Reading from the N-terminus, the 185-residue chain is Ovomucoid (185 aa).

3 Kazal-like domains span residues 1-63 (VEVD…ECRE), 64-128 (AVPM…ECRK), and 131-185 (AAVS…FGKC). 9 cysteine pairs are disulfide-bonded: cysteine 5–cysteine 43, cysteine 22–cysteine 40, cysteine 30–cysteine 61, cysteine 69–cysteine 108, cysteine 86–cysteine 105, cysteine 94–cysteine 126, cysteine 137–cysteine 167, cysteine 145–cysteine 164, and cysteine 153–cysteine 185. Asparagine 174 carries an N-linked (GlcNAc...) asparagine glycan.

It is found in the secreted. The sequence is that of Ovomucoid from Meleagris gallopavo (Wild turkey).